A 208-amino-acid chain; its full sequence is Glycerol-3-phosphate acyltransferase (208 aa).

5 consecutive transmembrane segments (helical) span residues 3 to 23 (ILLA…VVVS), 51 to 71 (KAAI…VWLA), 78 to 98 (DVAI…PVFF), 115 to 135 (AVHP…AFFF), and 140 to 160 (LAAL…FGMP).

Belongs to the PlsY family. In terms of assembly, probably interacts with PlsX.

Its subcellular location is the cell inner membrane. The catalysed reaction is an acyl phosphate + sn-glycerol 3-phosphate = a 1-acyl-sn-glycero-3-phosphate + phosphate. Its pathway is lipid metabolism; phospholipid metabolism. Catalyzes the transfer of an acyl group from acyl-phosphate (acyl-PO(4)) to glycerol-3-phosphate (G3P) to form lysophosphatidic acid (LPA). This enzyme utilizes acyl-phosphate as fatty acyl donor, but not acyl-CoA or acyl-ACP. The sequence is that of Glycerol-3-phosphate acyltransferase from Burkholderia orbicola (strain MC0-3).